The chain runs to 649 residues: Probable ADP-ribosylation factor GTPase-activating protein AGD14 (649 aa).

Residues 12–130 form the Arf-GAP domain; the sequence is EKIIRGLMKL…KYAGANDADK (119 aa). The C4-type zinc-finger motif lies at 27–50; the sequence is CINCNSLGPQYVCTTFWTFVCMAC. Disordered regions lie at residues 124–159, 209–279, 294–316, and 366–391; these read GANDADKPSKDSQDHVSSEDMTRRANSYHSYSQSPP, FSNE…VRSV, LGEAVSESRQNTGSQQGKTSNHV, and FTPANSFAGNLGQQPTSRPSELSAPK. Over residues 127 to 146 the composition is skewed to basic and acidic residues; that stretch reads DADKPSKDSQDHVSSEDMTR. The segment covering 150-159 has biased composition (low complexity); it reads SYHSYSQSPP. Polar residues-rich tracts occupy residues 248–257, 269–279, 300–315, and 366–385; these read PQFQHSNAPP, RTTSSGSVRSV, ESRQNTGSQQGKTSNH, and FTPANSFAGNLGQQPTSRPS.

GTPase-activating protein (GAP) for ADP ribosylation factor (ARF). This Arabidopsis thaliana (Mouse-ear cress) protein is Probable ADP-ribosylation factor GTPase-activating protein AGD14 (AGD14).